A 389-amino-acid polypeptide reads, in one-letter code: tRNA N(3)-cytidine methyltransferase METTL2 (389 aa).

The interval 1–20 is disordered; sequence MAASFPEGVPETEDGKRPQF. S-adenosyl-L-methionine is bound by residues Trp-78, Tyr-82, Gly-181, Asp-206, Asp-232, Leu-233, and Ile-253.

It belongs to the methyltransferase superfamily. METL family. In terms of assembly, monomer. Interacts with DALRD3.

The protein localises to the cytoplasm. The enzyme catalyses cytidine(32) in tRNA(Thr) + S-adenosyl-L-methionine = N(3)-methylcytidine(32) in tRNA(Thr) + S-adenosyl-L-homocysteine + H(+). It carries out the reaction cytidine(32) in tRNA(Arg)(CCU) + S-adenosyl-L-methionine = N(3)-methylcytidine(32) in tRNA(Arg)(CCU) + S-adenosyl-L-homocysteine + H(+). Its function is as follows. S-adenosyl-L-methionine-dependent methyltransferase that mediates N(3)-methylcytidine modification of residue 32 of the tRNA anticodon loop of tRNA(Thr)(UGU) and tRNA(Arg)(CCU). N(3)-methylcytidine methylation by METTL2 requires the N6-threonylcarbamoylation of tRNA (t6A37) by the EKC/KEOPS complex as prerequisite. This is tRNA N(3)-cytidine methyltransferase METTL2 from Mus musculus (Mouse).